Consider the following 406-residue polypeptide: GTPase Obg (406 aa).

Positions 1–159 (MKFVDEVSIH…RDLKLELKVL (159 aa)) constitute an Obg domain. Residues 127 to 148 (NTRFKSSTNRAPRQTTPGKPGE) are disordered. The segment covering 129-143 (RFKSSTNRAPRQTTP) has biased composition (polar residues). The OBG-type G domain occupies 160–334 (ADVGLLGLPN…LSQDIMRYLD (175 aa)). Residues 166–173 (GLPNAGKS), 191–195 (FTTLV), 213–216 (DIPG), 283–286 (NKMD), and 315–317 (SAL) each bind GTP. The Mg(2+) site is built by S173 and T193. The disordered stretch occupies residues 378–406 (GLKNAGAADDDDFDDEEDDGDGPEIFYVP). Residues 385–399 (ADDDDFDDEEDDGDG) are compositionally biased toward acidic residues.

The protein belongs to the TRAFAC class OBG-HflX-like GTPase superfamily. OBG GTPase family. In terms of assembly, monomer. Mg(2+) is required as a cofactor.

It is found in the cytoplasm. Its function is as follows. An essential GTPase which binds GTP, GDP and possibly (p)ppGpp with moderate affinity, with high nucleotide exchange rates and a fairly low GTP hydrolysis rate. Plays a role in control of the cell cycle, stress response, ribosome biogenesis and in those bacteria that undergo differentiation, in morphogenesis control. This Pseudomonas paraeruginosa (strain DSM 24068 / PA7) (Pseudomonas aeruginosa (strain PA7)) protein is GTPase Obg.